A 101-amino-acid polypeptide reads, in one-letter code: NAD(P)H-quinone oxidoreductase subunit 4L, chloroplastic (101 aa).

The next 3 helical transmembrane spans lie at 2–22 (ILEH…YGLI), 32–52 (MCLE…SDFF), and 61–81 (IFCI…LAIV).

This sequence belongs to the complex I subunit 4L family. As to quaternary structure, NDH is composed of at least 16 different subunits, 5 of which are encoded in the nucleus.

Its subcellular location is the plastid. It localises to the chloroplast thylakoid membrane. The catalysed reaction is a plastoquinone + NADH + (n+1) H(+)(in) = a plastoquinol + NAD(+) + n H(+)(out). The enzyme catalyses a plastoquinone + NADPH + (n+1) H(+)(in) = a plastoquinol + NADP(+) + n H(+)(out). Functionally, NDH shuttles electrons from NAD(P)H:plastoquinone, via FMN and iron-sulfur (Fe-S) centers, to quinones in the photosynthetic chain and possibly in a chloroplast respiratory chain. The immediate electron acceptor for the enzyme in this species is believed to be plastoquinone. Couples the redox reaction to proton translocation, and thus conserves the redox energy in a proton gradient. This is NAD(P)H-quinone oxidoreductase subunit 4L, chloroplastic from Draba nemorosa (Woodland whitlowgrass).